Reading from the N-terminus, the 287-residue chain is MEGIFYALIPMFTWGSIGFVSNKIGGKPSQQTLGMTFGALLFSLAVWLIVRPEMTLQLWLFGILGGFIWSIGQTGQFHAMQYMGVSVANPLSSGSQLVLGSLIGVLVFHEWTRPMQFVVGSLALLLLIVGFYFSSKQDDANAQVNHLHNFSKGFRALTYSTIGYVMYAVLFNNIMKFEVLSVILPMAVGMVLGAITFMSFKISIDQYVIKNSVVGLLWGIGNIFMLLAASKAGLAIAFSFSQLGAIISIVGGILFLGETKTKKEMRWVVTGIICFIVGAILLGVVKS.

The next 10 helical transmembrane spans lie at 4-26, 33-50, 55-72, 85-107, 117-134, 154-171, 181-200, 207-229, 234-256, and 268-285; these read IFYA…KIGG, LGMT…WLIV, TLQL…WSIG, VSVA…GVLV, FVVG…FYFS, FRAL…AVLF, SVIL…FMSF, YVIK…LLAA, LAIA…ILFL, and VVTG…LGVV.

It belongs to the GRP transporter (TC 2.A.7.5) family.

It localises to the cell membrane. This is Putative sugar uptake protein spyM18_2243 from Streptococcus pyogenes serotype M18 (strain MGAS8232).